A 90-amino-acid polypeptide reads, in one-letter code: UPF0237 protein MK1213 (90 aa).

Residues 5 to 79 (VVTVIGADRP…EELGVDVIVQ (75 aa)) enclose the ACT domain.

This sequence belongs to the UPF0237 family.

In Methanopyrus kandleri (strain AV19 / DSM 6324 / JCM 9639 / NBRC 100938), this protein is UPF0237 protein MK1213.